Reading from the N-terminus, the 716-residue chain is Fatty acid oxidation complex subunit alpha (716 aa).

An enoyl-CoA hydratase/isomerase region spans residues 1–189 (MIYQSPTIQV…KVGAVDAVVA (189 aa)). Residue Asp296 participates in substrate binding. Residues 311–716 (KEVKNAAVLG…ATNNGSYYQA (406 aa)) are 3-hydroxyacyl-CoA dehydrogenase. Residues Met324, Asp343, 400-402 (VVE), Lys407, and Ser429 each bind NAD(+). The For 3-hydroxyacyl-CoA dehydrogenase activity role is filled by His450. Asn453 lines the NAD(+) pocket. Substrate-binding residues include Asn500 and Tyr660.

This sequence in the N-terminal section; belongs to the enoyl-CoA hydratase/isomerase family. It in the C-terminal section; belongs to the 3-hydroxyacyl-CoA dehydrogenase family. Heterotetramer of two alpha chains (FadB) and two beta chains (FadA).

The enzyme catalyses a (3S)-3-hydroxyacyl-CoA + NAD(+) = a 3-oxoacyl-CoA + NADH + H(+). It catalyses the reaction a (3S)-3-hydroxyacyl-CoA = a (2E)-enoyl-CoA + H2O. The catalysed reaction is a 4-saturated-(3S)-3-hydroxyacyl-CoA = a (3E)-enoyl-CoA + H2O. It carries out the reaction (3S)-3-hydroxybutanoyl-CoA = (3R)-3-hydroxybutanoyl-CoA. The enzyme catalyses a (3Z)-enoyl-CoA = a 4-saturated (2E)-enoyl-CoA. It catalyses the reaction a (3E)-enoyl-CoA = a 4-saturated (2E)-enoyl-CoA. Its pathway is lipid metabolism; fatty acid beta-oxidation. Its function is as follows. Involved in the aerobic and anaerobic degradation of long-chain fatty acids via beta-oxidation cycle. Catalyzes the formation of 3-oxoacyl-CoA from enoyl-CoA via L-3-hydroxyacyl-CoA. It can also use D-3-hydroxyacyl-CoA and cis-3-enoyl-CoA as substrate. This chain is Fatty acid oxidation complex subunit alpha, found in Shewanella putrefaciens (strain CN-32 / ATCC BAA-453).